Here is a 674-residue protein sequence, read N- to C-terminus: Sodium/myo-inositol cotransporter 2 (674 aa).

At 1-27 the chain is on the extracellular side; the sequence is MESSTSSPQPPLSDPLDPFPQRSLEPG. The chain crosses the membrane as a helical span at residues 28–48; that stretch reads DIAVLVLYFLFVLAVGLWSTV. The Cytoplasmic segment spans residues 49–56; it reads KTKRDTVK. The helical transmembrane segment at 57–77 threads the bilayer; that stretch reads GYFLAGGDMVWWPVGASLFAS. Topologically, residues 78–102 are extracellular; that stretch reads NVGSGHFVGLAGSGAATGISVAAYE. A helical membrane pass occupies residues 103 to 123; it reads FNGMFSVLMLAWIFLPIYIAG. Over 124–140 the chain is Cytoplasmic; sequence QVTTMPEYLRRRFGGSR. Residues 141 to 161 form a helical membrane-spanning segment; sequence IAITLAVLYLFIYIFTKISVD. Over 162-180 the chain is Extracellular; sequence MYAGAIFIQQSLHLDLYLS. A helical membrane pass occupies residues 181-201; that stretch reads VVGLLAVTALYTVAGGLAAVI. Residues 202–208 are Cytoplasmic-facing; the sequence is YTDALQT. The helical transmembrane segment at 209–229 threads the bilayer; it reads LIMLVGALTLMGYSFAAVGGM. At 230–272 the chain is on the extracellular side; it reads EGLQEKYFLALPSNRSENSSCGLPREDAFHLFRDPLTSDLPWP. The helical transmembrane segment at 273 to 293 threads the bilayer; that stretch reads GILFGMSIPSLWYWCTDQVIV. Topologically, residues 294-308 are cytoplasmic; the sequence is QRSLAAKNLSHAKGG. The chain crosses the membrane as a helical span at residues 309-329; the sequence is SLMAAYLKVLPLFIMVFPGMV. Residues 330-375 are Extracellular-facing; sequence SRILFPDQVACADPETCQRVCNNPSGCSDIAYPKLVLELLPTGLRG. The chain crosses the membrane as a helical span at residues 376 to 396; that stretch reads LMMAVMVAALMSSLTSIFNSA. Residues 397 to 418 lie on the Cytoplasmic side of the membrane; the sequence is STIFTMDLWNHVRPRASEKELM. The chain crosses the membrane as a helical span at residues 419–439; it reads IVGRVFVLLLVLVSVLWIPVV. Residues 440 to 446 are Extracellular-facing; the sequence is QASQGGQ. Residues 447-467 form a helical membrane-spanning segment; it reads LFVYIQAISSYLQPPVAMVFV. Over 468–479 the chain is Cytoplasmic; it reads LGCFWKRANEKG. The helical transmembrane segment at 480-500 threads the bilayer; the sequence is AFWGLVLGLLLGFIRLILDFI. At 501 to 521 the chain is on the extracellular side; it reads YVEPACHQPDERPSVVKNVHY. A helical membrane pass occupies residues 522–542; the sequence is LYFSMILSSVTVLTVTVMSLL. At 543–653 the chain is on the cytoplasmic side; sequence TEPPSKEMIS…SIEENPVVKT (111 aa). The helical transmembrane segment at 654 to 674 threads the bilayer; sequence LLDVNCLLCICCAFFLWGYFA.

Belongs to the sodium:solute symporter (SSF) (TC 2.A.21) family. As to expression, expressed in brain, lung and kidney. In the kidney, strongly expressed in the cortex, at the luminal side of proximal convoluted tubules and in BBMVs. Weaker expression observed in the medulla (at protein level).

It is found in the membrane. The protein resides in the apical cell membrane. The enzyme catalyses myo-inositol(out) + 2 Na(+)(out) = myo-inositol(in) + 2 Na(+)(in). It catalyses the reaction 1D-chiro-inositol(out) + 2 Na(+)(out) = 1D-chiro-inositol(in) + 2 Na(+)(in). It carries out the reaction D-glucose(out) + 2 Na(+)(out) = D-glucose(in) + 2 Na(+)(in). The catalysed reaction is D-xylose(out) + 2 Na(+)(out) = D-xylose(in) + 2 Na(+)(in). MI transport activity stimulated five-fold under 24 hour hypertonic shock conditions. MI inward currents were gradually inhibited as increasing amounts of phlorizin were added to the superfusion medium. When sodium is replaced by potassium, MI uptake is dramatically reduced and in the presence of L-fucose or D-chiro-inositol (DCI), the specific accumulation of tracer amounts of MI is also reduced. Functionally, involved in the sodium-dependent cotransport of myo-inositol (MI) with a Na(+):MI stoichiometry of 2:1. Exclusively responsible for apical MI transport and absorption in intestine. Can also transport D-chiro-inositol (DCI) but not L-fucose. Exhibits stereospecific cotransport of both D-glucose and D-xylose. May induce apoptosis through the TNF-alpha, PDCD1 pathway. May play a role in the regulation of MI concentration in serum, involving reabsorption in at least the proximal tubule of the kidney. The polypeptide is Sodium/myo-inositol cotransporter 2 (Oryctolagus cuniculus (Rabbit)).